The chain runs to 818 residues: Patatin-like phospholipase domain-containing protein YALI0D16379g (818 aa).

2 disordered regions span residues 1-50 (MLKL…RDVN) and 154-178 (EEKRRRGKSKKDKEGSEGDKTKTKE). The segment covering 22–38 (SQQLTLDSPEGSETSSR) has biased composition (polar residues). The span at 164–178 (KDKEGSEGDKTKTKE) shows a compositional bias: basic and acidic residues. The chain crosses the membrane as a helical span at residues 223–243 (WPALFFIGMWLLFLTTIYASV). Residues 398–589 (LCLSGGGCFA…RTDIPVDALN (192 aa)) form the PNPLA domain. The short motif at 429–433 (GTSGG) is the GXSXG element. Ser431 (nucleophile) is an active-site residue. Residue Asp576 is the Proton acceptor of the active site. The tract at residues 781 to 805 (AGTDISSSNSDYDHEPQWEMDEGDS) is disordered.

The protein belongs to the PLPL family.

The protein localises to the membrane. Functionally, probable lipid hydrolase. The sequence is that of Patatin-like phospholipase domain-containing protein YALI0D16379g from Yarrowia lipolytica (strain CLIB 122 / E 150) (Yeast).